Here is a 105-residue protein sequence, read N- to C-terminus: Large ribosomal subunit protein bL21 (105 aa).

It belongs to the bacterial ribosomal protein bL21 family. As to quaternary structure, part of the 50S ribosomal subunit. Contacts protein L20.

Functionally, this protein binds to 23S rRNA in the presence of protein L20. In Desulfatibacillum aliphaticivorans, this protein is Large ribosomal subunit protein bL21.